Consider the following 96-residue polypeptide: ATP-dependent Clp protease adapter protein ClpS (96 aa).

This sequence belongs to the ClpS family. Binds to the N-terminal domain of the chaperone ClpA.

In terms of biological role, involved in the modulation of the specificity of the ClpAP-mediated ATP-dependent protein degradation. The polypeptide is ATP-dependent Clp protease adapter protein ClpS (Campylobacter jejuni subsp. doylei (strain ATCC BAA-1458 / RM4099 / 269.97)).